The primary structure comprises 381 residues: tRNA pseudouridine synthase D (381 aa).

The active-site Nucleophile is the Asp-81. Positions 160 to 335 constitute a TRUD domain; the sequence is GMPNYFGSQR…TLGSRRFFWV (176 aa).

Belongs to the pseudouridine synthase TruD family.

It carries out the reaction uridine(13) in tRNA = pseudouridine(13) in tRNA. Its function is as follows. Responsible for synthesis of pseudouridine from uracil-13 in transfer RNAs. The chain is tRNA pseudouridine synthase D from Helicobacter pylori (strain G27).